A 255-amino-acid chain; its full sequence is Membrane protein insertase YidC 2 (255 aa).

The signal sequence occupies residues 1-20 (MKKKLGLLAMVVALMAITAG). Cysteine 21 carries the N-palmitoyl cysteine lipid modification. The S-diacylglycerol cysteine moiety is linked to residue cysteine 21. Helical transmembrane passes span 59–79 (YGLA…PLMI), 129–149 (LAGC…YHAI), 160–180 (FLWF…VAAI), 202–222 (MMLW…PAAL), and 223–243 (SLYW…IKGP).

This sequence belongs to the OXA1/ALB3/YidC family. Type 2 subfamily.

It localises to the cell membrane. Its function is as follows. Required for the insertion and/or proper folding and/or complex formation of integral membrane proteins into the membrane. Involved in integration of membrane proteins that insert both dependently and independently of the Sec translocase complex, as well as at least some lipoproteins. The polypeptide is Membrane protein insertase YidC 2 (Bacillus anthracis).